The primary structure comprises 791 residues: Phenylalanine--tRNA ligase beta subunit (791 aa).

The region spanning 39-148 (AADFSGVVVA…ADAPVGADIR (110 aa)) is the tRNA-binding domain. Residues 401 to 476 (PLRAPVRLRE…RVYGYDAIPR (76 aa)) enclose the B5 domain. Mg(2+)-binding residues include aspartate 454, aspartate 460, glutamate 463, and glutamate 464. In terms of domain architecture, FDX-ACB spans 697–790 (SRFPLVRRDL…LAADFGAKLR (94 aa)).

Belongs to the phenylalanyl-tRNA synthetase beta subunit family. Type 1 subfamily. Tetramer of two alpha and two beta subunits. Requires Mg(2+) as cofactor.

It is found in the cytoplasm. It catalyses the reaction tRNA(Phe) + L-phenylalanine + ATP = L-phenylalanyl-tRNA(Phe) + AMP + diphosphate + H(+). The protein is Phenylalanine--tRNA ligase beta subunit of Methylococcus capsulatus (strain ATCC 33009 / NCIMB 11132 / Bath).